The sequence spans 319 residues: Probable arabinan endo-1,5-alpha-L-arabinosidase A (319 aa).

An N-terminal signal peptide occupies residues 1–19 (MYLQSSLALVLLRAAVVHG). Asp34 acts as the Proton acceptor in catalysis. An N-linked (GlcNAc...) asparagine glycan is attached at Asn53. Glu198 functions as the Proton donor in the catalytic mechanism.

The protein belongs to the glycosyl hydrolase 43 family.

It localises to the secreted. It catalyses the reaction Endohydrolysis of (1-&gt;5)-alpha-arabinofuranosidic linkages in (1-&gt;5)-arabinans.. Its pathway is glycan metabolism; L-arabinan degradation. In terms of biological role, endo-1,5-alpha-L-arabinanase involved in degradation of pectin. Its preferred substrate is linear 1,5-alpha-L-arabinan. This chain is Probable arabinan endo-1,5-alpha-L-arabinosidase A (abnA), found in Aspergillus flavus (strain ATCC 200026 / FGSC A1120 / IAM 13836 / NRRL 3357 / JCM 12722 / SRRC 167).